Consider the following 372-residue polypeptide: Queuine tRNA-ribosyltransferase (372 aa).

Residue D89 is the Proton acceptor of the active site. Residues D89–F93, D161, and G232 each bind substrate. The tract at residues G262 to S268 is RNA binding. Residue D281 is the Nucleophile of the active site. The tract at residues T286–R290 is RNA binding; important for wobble base 34 recognition. 4 residues coordinate Zn(2+): C319, C321, C324, and H351.

Belongs to the queuine tRNA-ribosyltransferase family. In terms of assembly, homodimer. Within each dimer, one monomer is responsible for RNA recognition and catalysis, while the other monomer binds to the replacement base PreQ1. Requires Zn(2+) as cofactor.

It catalyses the reaction 7-aminomethyl-7-carbaguanine + guanosine(34) in tRNA = 7-aminomethyl-7-carbaguanosine(34) in tRNA + guanine. It functions in the pathway tRNA modification; tRNA-queuosine biosynthesis. In terms of biological role, catalyzes the base-exchange of a guanine (G) residue with the queuine precursor 7-aminomethyl-7-deazaguanine (PreQ1) at position 34 (anticodon wobble position) in tRNAs with GU(N) anticodons (tRNA-Asp, -Asn, -His and -Tyr). Catalysis occurs through a double-displacement mechanism. The nucleophile active site attacks the C1' of nucleotide 34 to detach the guanine base from the RNA, forming a covalent enzyme-RNA intermediate. The proton acceptor active site deprotonates the incoming PreQ1, allowing a nucleophilic attack on the C1' of the ribose to form the product. After dissociation, two additional enzymatic reactions on the tRNA convert PreQ1 to queuine (Q), resulting in the hypermodified nucleoside queuosine (7-(((4,5-cis-dihydroxy-2-cyclopenten-1-yl)amino)methyl)-7-deazaguanosine). In Chlamydia trachomatis serovar L2 (strain ATCC VR-902B / DSM 19102 / 434/Bu), this protein is Queuine tRNA-ribosyltransferase.